Here is a 292-residue protein sequence, read N- to C-terminus: ATP synthase gamma chain (292 aa).

This sequence belongs to the ATPase gamma chain family. F-type ATPases have 2 components, CF(1) - the catalytic core - and CF(0) - the membrane proton channel. CF(1) has five subunits: alpha(3), beta(3), gamma(1), delta(1), epsilon(1). CF(0) has three main subunits: a, b and c.

The protein localises to the cell inner membrane. Produces ATP from ADP in the presence of a proton gradient across the membrane. The gamma chain is believed to be important in regulating ATPase activity and the flow of protons through the CF(0) complex. This is ATP synthase gamma chain from Chlorobaculum parvum (strain DSM 263 / NCIMB 8327) (Chlorobium vibrioforme subsp. thiosulfatophilum).